A 267-amino-acid chain; its full sequence is tRNA pseudouridine synthase A (267 aa).

The active-site Nucleophile is the aspartate 51. Tyrosine 109 is a substrate binding site.

It belongs to the tRNA pseudouridine synthase TruA family. In terms of assembly, homodimer.

It carries out the reaction uridine(38/39/40) in tRNA = pseudouridine(38/39/40) in tRNA. Its function is as follows. Formation of pseudouridine at positions 38, 39 and 40 in the anticodon stem and loop of transfer RNAs. In Staphylococcus carnosus (strain TM300), this protein is tRNA pseudouridine synthase A.